The primary structure comprises 197 residues: Syndecan-4 (197 aa).

A signal peptide spans 1–19 (MPLPRAAFLLGLLLAAAAA). The Extracellular portion of the chain corresponds to 20–147 (ESVRETETMD…SIFERTEVLT (128 aa)). O-linked (Xyl...) (glycosaminoglycan) serine glycosylation is found at serine 38, serine 65, and serine 67. Asparagine 124 and asparagine 136 each carry an N-linked (GlcNAc...) asparagine glycan. The helical transmembrane segment at 148-168 (ALIAGGAVGLLFAVFLILLLV) threads the bilayer. Residues 169–197 (YRMKKKDEGSYDLGKKPIYKKAPTNEFYA) are Cytoplasmic-facing.

It belongs to the syndecan proteoglycan family. In terms of assembly, interacts with SDOS. Post-translationally, O-glycosylated; contains both chondroitin sulfate and heparan sulfate. Ser-38, Ser-65 and Ser-67 can all be modified by either chondroitin sulfate or heparan sulfate, and the protein exists in forms that contain only chondroitin sulfate, only heparan sulfate and both chondroitin sulfate and heparan sulfate.

It is found in the membrane. Functionally, cell surface proteoglycan which regulates exosome biogenesis in concert with SDCBP and PDCD6IP. The protein is Syndecan-4 (SDC4) of Gallus gallus (Chicken).